Here is a 128-residue protein sequence, read N- to C-terminus: Glycine cleavage system H protein (128 aa).

Residues 24-106 (LVRIGISEFA…HGEGWLLIIR (83 aa)) enclose the Lipoyl-binding domain. K65 is subject to N6-lipoyllysine.

Belongs to the GcvH family. As to quaternary structure, the glycine cleavage system is composed of four proteins: P, T, L and H. Requires (R)-lipoate as cofactor.

Its function is as follows. The glycine cleavage system catalyzes the degradation of glycine. The H protein shuttles the methylamine group of glycine from the P protein to the T protein. This Prochlorococcus marinus (strain NATL1A) protein is Glycine cleavage system H protein.